A 152-amino-acid polypeptide reads, in one-letter code: Probable prefoldin subunit 5 (152 aa).

This sequence belongs to the prefoldin subunit alpha family. In terms of assembly, heterohexamer of two PFD-alpha type and four PFD-beta type subunits.

In terms of biological role, binds specifically to cytosolic chaperonin (c-CPN) and transfers target proteins to it. Binds to nascent polypeptide chain and promotes folding in an environment in which there are many competing pathways for nonnative proteins. In Caenorhabditis elegans, this protein is Probable prefoldin subunit 5 (pfd-5).